The chain runs to 69 residues: ATP synthase subunits region ORF 1 (69 aa).

This chain is ATP synthase subunits region ORF 1, found in Fuscovulum blasticum (Rhodobacter blasticus).